The primary structure comprises 396 residues: Elongation factor Tu (396 aa).

The tr-type G domain maps to 10–206 (KPHVNVGTIG…ALDSYIPTPE (197 aa)). The segment at 19–26 (GHVDHGKT) is G1. Residue 19 to 26 (GHVDHGKT) coordinates GTP. T26 contributes to the Mg(2+) binding site. The segment at 60 to 64 (GITIN) is G2. Residues 81–84 (DCPG) are G3. Residues 81-85 (DCPGH) and 136-139 (NKCD) each bind GTP. The interval 136–139 (NKCD) is G4. Residues 174-176 (SAK) are G5.

It belongs to the TRAFAC class translation factor GTPase superfamily. Classic translation factor GTPase family. EF-Tu/EF-1A subfamily. As to quaternary structure, monomer.

The protein localises to the cytoplasm. The enzyme catalyses GTP + H2O = GDP + phosphate + H(+). GTP hydrolase that promotes the GTP-dependent binding of aminoacyl-tRNA to the A-site of ribosomes during protein biosynthesis. In Ralstonia nicotianae (strain ATCC BAA-1114 / GMI1000) (Ralstonia solanacearum), this protein is Elongation factor Tu.